Consider the following 175-residue polypeptide: Large ribosomal subunit protein uL5 (175 aa).

The protein belongs to the universal ribosomal protein uL5 family. As to quaternary structure, part of the 50S ribosomal subunit; contacts the 5S rRNA and probably tRNA. Forms a bridge to the 30S subunit in the 70S ribosome.

This is one of the proteins that bind and probably mediate the attachment of the 5S RNA into the large ribosomal subunit, where it forms part of the central protuberance. In the 70S ribosome it contacts protein S13 of the 30S subunit (bridge B1b), connecting the 2 subunits; this bridge is implicated in subunit movement. May contact the P site tRNA; the 5S rRNA and some of its associated proteins might help stabilize positioning of ribosome-bound tRNAs. The protein is Large ribosomal subunit protein uL5 of Halobacterium salinarum (strain ATCC 29341 / DSM 671 / R1).